The following is a 391-amino-acid chain: Leucine-rich repeat-containing protein 74B (391 aa).

A disordered region spans residues 1–38 (MKGPCEVQKNEDQEGEAAATGPQAETLEAERSWTADSH). The segment covering 28–38 (EAERSWTADSH) has biased composition (basic and acidic residues). LRR repeat units lie at residues 106 to 126 (YIKR…EALA), 134 to 154 (IISD…QAIC), 162 to 182 (TVEK…QHLA), 190 to 211 (GLKS…ILGP), 218 to 239 (GLTE…AFAR), 246 to 259 (FLKV…GFGD), 274 to 294 (VLEE…LKLG), 302 to 323 (TLRI…GLLK), and 332 to 354 (ALEL…ASSM). The interval 371 to 391 (KDWPQASTPSQPASAPSDSGL) is disordered. Residues 374–391 (PQASTPSQPASAPSDSGL) are compositionally biased toward low complexity.

The chain is Leucine-rich repeat-containing protein 74B from Mus musculus (Mouse).